The chain runs to 269 residues: GTP cyclohydrolase FolE2 (269 aa).

It belongs to the GTP cyclohydrolase IV family.

It carries out the reaction GTP + H2O = 7,8-dihydroneopterin 3'-triphosphate + formate + H(+). Its pathway is cofactor biosynthesis; 7,8-dihydroneopterin triphosphate biosynthesis; 7,8-dihydroneopterin triphosphate from GTP: step 1/1. In terms of biological role, converts GTP to 7,8-dihydroneopterin triphosphate. The sequence is that of GTP cyclohydrolase FolE2 from Burkholderia ambifaria (strain ATCC BAA-244 / DSM 16087 / CCUG 44356 / LMG 19182 / AMMD) (Burkholderia cepacia (strain AMMD)).